Reading from the N-terminus, the 156-residue chain is ATP synthase subunit b (156 aa).

The helical transmembrane segment at leucine 7–leucine 29 threads the bilayer.

The protein belongs to the ATPase B chain family. F-type ATPases have 2 components, F(1) - the catalytic core - and F(0) - the membrane proton channel. F(1) has five subunits: alpha(3), beta(3), gamma(1), delta(1), epsilon(1). F(0) has three main subunits: a(1), b(2) and c(10-14). The alpha and beta chains form an alternating ring which encloses part of the gamma chain. F(1) is attached to F(0) by a central stalk formed by the gamma and epsilon chains, while a peripheral stalk is formed by the delta and b chains.

The protein resides in the cell inner membrane. Functionally, f(1)F(0) ATP synthase produces ATP from ADP in the presence of a proton or sodium gradient. F-type ATPases consist of two structural domains, F(1) containing the extramembraneous catalytic core and F(0) containing the membrane proton channel, linked together by a central stalk and a peripheral stalk. During catalysis, ATP synthesis in the catalytic domain of F(1) is coupled via a rotary mechanism of the central stalk subunits to proton translocation. Component of the F(0) channel, it forms part of the peripheral stalk, linking F(1) to F(0). The polypeptide is ATP synthase subunit b (Vibrio alginolyticus).